A 208-amino-acid polypeptide reads, in one-letter code: N-(5'-phosphoribosyl)anthranilate isomerase (208 aa).

Belongs to the TrpF family.

The enzyme catalyses N-(5-phospho-beta-D-ribosyl)anthranilate = 1-(2-carboxyphenylamino)-1-deoxy-D-ribulose 5-phosphate. It participates in amino-acid biosynthesis; L-tryptophan biosynthesis; L-tryptophan from chorismate: step 3/5. This is N-(5'-phosphoribosyl)anthranilate isomerase from Pyrococcus furiosus (strain ATCC 43587 / DSM 3638 / JCM 8422 / Vc1).